The chain runs to 118 residues: Cysteine--tRNA ligase (118 aa).

Cysteine 28 contacts Zn(2+). The short motif at 30 to 40 is the 'HIGH' region element; the sequence is PTVYNYIHIGN.

This sequence belongs to the class-I aminoacyl-tRNA synthetase family. In terms of assembly, monomer. Zn(2+) serves as cofactor.

Its subcellular location is the cytoplasm. It catalyses the reaction tRNA(Cys) + L-cysteine + ATP = L-cysteinyl-tRNA(Cys) + AMP + diphosphate. This Staphylococcus xylosus protein is Cysteine--tRNA ligase (cysS).